Here is a 543-residue protein sequence, read N- to C-terminus: Carboxypeptidase Y homolog A (543 aa).

A signal peptide spans 1 to 17 (MRVLPATLLVGAATAAA). Positions 18 to 124 (PPFQQILGLP…KLEAYDLRVK (107 aa)) are excised as a propeptide. 5 cysteine pairs are disulfide-bonded: cysteine 179-cysteine 419, cysteine 313-cysteine 327, cysteine 337-cysteine 360, cysteine 344-cysteine 353, and cysteine 382-cysteine 389. Asparagine 210 carries an N-linked (GlcNAc...) asparagine glycan. Serine 266 is an active-site residue. Aspartate 458 is a catalytic residue. A glycan (N-linked (GlcNAc...) asparagine) is linked at asparagine 509. Histidine 520 is an active-site residue.

The protein belongs to the peptidase S10 family.

It localises to the vacuole. The catalysed reaction is Release of a C-terminal amino acid with broad specificity.. Vacuolar carboxypeptidase involved in degradation of small peptides. Digests preferentially peptides containing an aliphatic or hydrophobic residue in P1' position, as well as methionine, leucine or phenylalanine in P1 position of ester substrate. The protein is Carboxypeptidase Y homolog A (cpyA) of Aspergillus fumigatus (strain ATCC MYA-4609 / CBS 101355 / FGSC A1100 / Af293) (Neosartorya fumigata).